Consider the following 637-residue polypeptide: tRNA 5-methylaminomethyl-2-thiouridine biosynthesis bifunctional protein MnmC (637 aa).

Residues 1–20 are disordered; it reads MSERIEWLEDGTAGGSPYSP. Residues 1–232 are tRNA (mnm(5)s(2)U34)-methyltransferase; it reads MSERIEWLED…KRDNLQGEYQ (232 aa). Positions 255-637 are FAD-dependent cmnm(5)s(2)U34 oxidoreductase; it reads IGAGLAGSAV…YATRLQPSGS (383 aa).

This sequence in the N-terminal section; belongs to the methyltransferase superfamily. tRNA (mnm(5)s(2)U34)-methyltransferase family. The protein in the C-terminal section; belongs to the DAO family. FAD serves as cofactor.

It localises to the cytoplasm. It catalyses the reaction 5-aminomethyl-2-thiouridine(34) in tRNA + S-adenosyl-L-methionine = 5-methylaminomethyl-2-thiouridine(34) in tRNA + S-adenosyl-L-homocysteine + H(+). Functionally, catalyzes the last two steps in the biosynthesis of 5-methylaminomethyl-2-thiouridine (mnm(5)s(2)U) at the wobble position (U34) in tRNA. Catalyzes the FAD-dependent demodification of cmnm(5)s(2)U34 to nm(5)s(2)U34, followed by the transfer of a methyl group from S-adenosyl-L-methionine to nm(5)s(2)U34, to form mnm(5)s(2)U34. The chain is tRNA 5-methylaminomethyl-2-thiouridine biosynthesis bifunctional protein MnmC from Polaromonas naphthalenivorans (strain CJ2).